A 662-amino-acid chain; its full sequence is Glycogen debranching enzyme (662 aa).

Catalysis depends on D338, which acts as the Nucleophile. E373 acts as the Proton donor in catalysis.

This sequence belongs to the glycosyl hydrolase 13 family.

The enzyme catalyses Hydrolysis of (1-&gt;6)-alpha-D-glucosidic linkages to branches with degrees of polymerization of three or four glucose residues in limit dextrin.. It functions in the pathway glycan degradation; glycogen degradation. In terms of biological role, removes maltotriose and maltotetraose chains that are attached by 1,6-alpha-linkage to the limit dextrin main chain, generating a debranched limit dextrin. This chain is Glycogen debranching enzyme, found in Yersinia pestis bv. Antiqua (strain Angola).